Consider the following 237-residue polypeptide: Large ribosomal subunit protein bL25 (237 aa).

Residues 1–104 (MELTAKPRTP…SVPVHTTGRS (104 aa)) are N-terminal domain. Positions 105–189 (QGEVQGGLVD…ELEAEVQAAQ (85 aa)) are middle domain. The segment at 190–237 (VAGLVAAGELSEEAAEAVLEGDASLEEVKAEASEDNAGTDSEDNSDAQ) is C-terminal domain. Residues 205–237 (EAVLEGDASLEEVKAEASEDNAGTDSEDNSDAQ) are disordered.

The protein belongs to the bacterial ribosomal protein bL25 family. CTC subfamily. In terms of assembly, part of the 50S ribosomal subunit. Contacts proteins L11 and L16, the A site tRNA, and the 5S and 23S rRNAs.

Its function is as follows. This is one of 3 proteins that mediate the attachment of the 5S rRNA onto the large ribosomal subunit. This protein has three domains. The N-terminal one is bound on the solvent face, the middle domain fills the space between the 5S rRNA and the L11 arm contacting the 23S rRNA while the C-terminal domain is on the edge of the intersubunit interface and contacts the A site. The protein conformation changes upon binding of a tRNA mimic to the A site, although the mimic does not interact directly with CTC itself, consistent with CTCs presumed role in moderating A site binding. The sequence is that of Large ribosomal subunit protein bL25 (rplY) from Deinococcus radiodurans (strain ATCC 13939 / DSM 20539 / JCM 16871 / CCUG 27074 / LMG 4051 / NBRC 15346 / NCIMB 9279 / VKM B-1422 / R1).